Consider the following 500-residue polypeptide: Glucose-6-phosphate isomerase (500 aa).

E332 (proton donor) is an active-site residue. Residues H363 and K473 contribute to the active site.

This sequence belongs to the GPI family.

It is found in the cytoplasm. It carries out the reaction alpha-D-glucose 6-phosphate = beta-D-fructose 6-phosphate. It functions in the pathway carbohydrate biosynthesis; gluconeogenesis. It participates in carbohydrate degradation; glycolysis; D-glyceraldehyde 3-phosphate and glycerone phosphate from D-glucose: step 2/4. In terms of biological role, catalyzes the reversible isomerization of glucose-6-phosphate to fructose-6-phosphate. The chain is Glucose-6-phosphate isomerase from Rhizorhabdus wittichii (strain DSM 6014 / CCUG 31198 / JCM 15750 / NBRC 105917 / EY 4224 / RW1) (Sphingomonas wittichii).